The following is a 451-amino-acid chain: Phosphoglucosamine mutase (451 aa).

Ser103 functions as the Phosphoserine intermediate in the catalytic mechanism. Residues Ser103, Asp243, Asp245, and Asp247 each coordinate Mg(2+). Position 103 is a phosphoserine (Ser103).

This sequence belongs to the phosphohexose mutase family. It depends on Mg(2+) as a cofactor. In terms of processing, activated by phosphorylation.

It catalyses the reaction alpha-D-glucosamine 1-phosphate = D-glucosamine 6-phosphate. Catalyzes the conversion of glucosamine-6-phosphate to glucosamine-1-phosphate. The protein is Phosphoglucosamine mutase of Lactobacillus gasseri (strain ATCC 33323 / DSM 20243 / BCRC 14619 / CIP 102991 / JCM 1131 / KCTC 3163 / NCIMB 11718 / NCTC 13722 / AM63).